The sequence spans 862 residues: MYSGAGPVLVPPTTTPPLPMPAYTFKPPPRPDFGTSGRTIKLQANVFEMDIPKIEIYHYDIDIKPEKCPRRVNREIVEHMVQHFKAQIFGDRKPVFDGRKNLYTAMPLPIARDKQVELEVTLPGEGKDRIFKVAIKWMACVSLQALHDALSGRLPNVPFETVQALDVVMRHLPSMRYTPVGRSFFTASEGCANPLGGGREVWFGFHQSVRPSLWKMMLNIDVSATAFYKAQPVIEFMCEVLDFKSIEEQQKPLTDSQRVKFTKEIKGLKVEITHCGQMKRKYRVCNVTRRPASHQTFPLQQESGQTVECTVAQYFKDRHKLVLRYPHLPCLQVGQEQKHTYLPLEVCNIVAGQRCIKKLTDNQTSTMIRATARSAPDRQEEISKLMRSASFNTDPFVREFGIMVKDDMTDVTGRVLQPPSILYGGRSKAIATPVQGVWDMRNKQFHTGIEIKVWAIACFAPQRQCTEVHLKTFTEQLRKISRDAGMPIQGQPCFCKYAQGADSVEPMFRHLKNTYTGLQLVVVILPGKTPVYAEVKRVGDTVLGMATQCVQMKNVQRTTPQTLSNLCLKINVKLGGVNNILLPQGRPPVFQQPVIFLGADVTHPPAGDGKKPSIAAVVGSMDAHPNRYCATVRVQQHRQEIIQDLSAMVRELLIQFYKSTRFKPTRIIFYRDGVSEGQFQQVLHHELLAIREACIKLEKDYQPGITFIVVQKRHHTRLFCTDRNERVGKSGNIPAGTTVDTKITHPSEFDFYLCSHAGIQGTSRPSHYHVLWDDNRFSSDELQILTYQLCHTYVRCTRSVSIPAPAYYAHLVAFRARYHLVDKEHDSAEGSHTSGQSNGRDQQALAKAVQVHQDTLRTMYFA.

The PAZ domain maps to 232–351 (PVIEFMCEVL…LPLEVCNIVA (120 aa)). Interaction with guide RNA regions lie at residues 314–319 (YFKDRH) and 527–569 (GKTP…LCLK). A Piwi domain is found at 520-821 (LVVVILPGKT…VAFRARYHLV (302 aa)). Positions 590-593 (FQQP) are interaction with GW182 family members. Asp-600 is an a divalent metal cation binding site. The segment at 653-663 (LIQFYKSTRFK) is interaction with GW182 family members. Residue Asp-672 participates in a divalent metal cation binding. 3 interaction with guide RNA regions span residues 712-713 (KR), 756-764 (HAGIQGTSR), and 793-815 (YVRC…VAFR). His-810 serves as a coordination point for a divalent metal cation. Residues 825–847 (HDSAEGSHTSGQSNGRDQQALAK) are disordered. Polar residues predominate over residues 830–841 (GSHTSGQSNGRD).

The protein belongs to the argonaute family. Ago subfamily. In terms of assembly, component of the RISC loading complex (RLC), or micro-RNA (miRNA) loading complex (miRLC), which is composed of dicer1, ago2 and tarbp2. Note that the trimeric RLC/miRLC is also referred to as RISC. Requires Mg(2+) as cofactor. Mn(2+) serves as cofactor.

It localises to the cytoplasm. The protein resides in the P-body. It catalyses the reaction Endonucleolytic cleavage to 5'-phosphomonoester.. Functionally, required for RNA-mediated gene silencing (RNAi) by the RNA-induced silencing complex (RISC). The 'minimal RISC' appears to include ago2 bound to a short guide RNA such as a microRNA (miRNA) or short interfering RNA (siRNA). These guide RNAs direct RISC to complementary mRNAs that are targets for RISC-mediated gene silencing. The precise mechanism of gene silencing depends on the degree of complementarity between the miRNA or siRNA and its target. Binding of RISC to a perfectly complementary mRNA generally results in silencing due to endonucleolytic cleavage of the mRNA specifically by ago2. Binding of RISC to a partially complementary mRNA results in silencing through inhibition of translation, and this is independent of endonuclease activity. The inhibition of translational initiation leads to the accumulation of the affected mRNA in cytoplasmic processing bodies (P-bodies), where mRNA degradation may subsequently occur. This is Protein argonaute-2 (ago2) from Xenopus laevis (African clawed frog).